The sequence spans 72 residues: Translation initiation factor IF-1 (72 aa).

The region spanning 1–72 is the S1-like domain; sequence MARDDVIEVD…DRGRITFRYK (72 aa).

It belongs to the IF-1 family. In terms of assembly, component of the 30S ribosomal translation pre-initiation complex which assembles on the 30S ribosome in the order IF-2 and IF-3, IF-1 and N-formylmethionyl-tRNA(fMet); mRNA recruitment can occur at any time during PIC assembly.

Its subcellular location is the cytoplasm. Its function is as follows. One of the essential components for the initiation of protein synthesis. Stabilizes the binding of IF-2 and IF-3 on the 30S subunit to which N-formylmethionyl-tRNA(fMet) subsequently binds. Helps modulate mRNA selection, yielding the 30S pre-initiation complex (PIC). Upon addition of the 50S ribosomal subunit IF-1, IF-2 and IF-3 are released leaving the mature 70S translation initiation complex. The sequence is that of Translation initiation factor IF-1 from Helicobacter acinonychis (strain Sheeba).